Consider the following 238-residue polypeptide: Adapter protein MecA (238 aa).

Residues 120-136 (QQQKDNKQNQDQNERNR) are compositionally biased toward basic and acidic residues. The tract at residues 120 to 139 (QQQKDNKQNQDQNERNRQNT) is disordered.

This sequence belongs to the MecA family. Homodimer.

Functionally, enables the recognition and targeting of unfolded and aggregated proteins to the ClpC protease or to other proteins involved in proteolysis. The polypeptide is Adapter protein MecA (Staphylococcus saprophyticus subsp. saprophyticus (strain ATCC 15305 / DSM 20229 / NCIMB 8711 / NCTC 7292 / S-41)).